Reading from the N-terminus, the 83-residue chain is Small ribosomal subunit protein bS16 (83 aa).

This sequence belongs to the bacterial ribosomal protein bS16 family.

In Herminiimonas arsenicoxydans, this protein is Small ribosomal subunit protein bS16.